Consider the following 437-residue polypeptide: ATP-dependent protease ATPase subunit HslU (437 aa).

Residues V18, 60–65, D250, E315, and R387 contribute to the ATP site; that span reads GCGKTE.

Belongs to the ClpX chaperone family. HslU subfamily. A double ring-shaped homohexamer of HslV is capped on each side by a ring-shaped HslU homohexamer. The assembly of the HslU/HslV complex is dependent on binding of ATP.

It localises to the cytoplasm. ATPase subunit of a proteasome-like degradation complex; this subunit has chaperone activity. The binding of ATP and its subsequent hydrolysis by HslU are essential for unfolding of protein substrates subsequently hydrolyzed by HslV. HslU recognizes the N-terminal part of its protein substrates and unfolds these before they are guided to HslV for hydrolysis. The protein is ATP-dependent protease ATPase subunit HslU of Methylorubrum extorquens (strain PA1) (Methylobacterium extorquens).